Reading from the N-terminus, the 265-residue chain is Capsule polysaccharide export inner-membrane protein BexB (265 aa).

6 helical membrane-spanning segments follow: residues 37–57 (IGFF…VMMW), 64–84 (KFST…AMMW), 118–138 (LLEV…LVMI), 151–171 (LIAW…ICAI), 178–198 (FGKI…AFFF), and 235–255 (ESIG…LVMV). Positions 37-258 (IGFFWLFVEP…LLGLVMVKNF (222 aa)) constitute an ABC transmembrane type-2 domain.

The protein belongs to the ABC-2 integral membrane protein family.

Its subcellular location is the cell inner membrane. Its function is as follows. May form an ATP-driven capsule polysaccharide export apparatus, in association with the BexA, BexC and BexD proteins. This is Capsule polysaccharide export inner-membrane protein BexB (bexB) from Haemophilus influenzae.